A 146-amino-acid polypeptide reads, in one-letter code: Ribonuclease H (146 aa).

Residues 1-141 (MKHVDIFTDG…ADELARKGME (141 aa)) enclose the RNase H type-1 domain. Mg(2+) contacts are provided by Asp9, Glu47, Asp69, and Asp133. The disordered stretch occupies residues 123 to 146 (HAGHPENERADELARKGMEPFKRR). Positions 125–146 (GHPENERADELARKGMEPFKRR) are enriched in basic and acidic residues.

This sequence belongs to the RNase H family. As to quaternary structure, monomer. Requires Mg(2+) as cofactor.

Its subcellular location is the cytoplasm. The catalysed reaction is Endonucleolytic cleavage to 5'-phosphomonoester.. In terms of biological role, endonuclease that specifically degrades the RNA of RNA-DNA hybrids. The sequence is that of Ribonuclease H from Agrobacterium fabrum (strain C58 / ATCC 33970) (Agrobacterium tumefaciens (strain C58)).